The sequence spans 532 residues: UDP-glucuronosyltransferase 1A4 (532 aa).

The signal sequence occupies residues 1 to 27; sequence MVLGVWITLWRLVRLLLLLCVLPWAEG. N-linked (GlcNAc...) asparagine glycans are attached at residues N141 and N295. A helical membrane pass occupies residues 490 to 506; that stretch reads VIGFLLAIVLTVAFVTF.

The protein belongs to the UDP-glycosyltransferase family. Homodimers. Homooligomer. Interacts with UGT1A1, UGT1A3, UGT1A6, UGT1A7, UGT1A8, UGT1A9 and UGT1A10 to form heterodimers.

It is found in the endoplasmic reticulum membrane. It carries out the reaction glucuronate acceptor + UDP-alpha-D-glucuronate = acceptor beta-D-glucuronoside + UDP + H(+). The enzyme catalyses calcidiol + UDP-alpha-D-glucuronate = calcidiol 25-O-(beta-D-glucuronide) + UDP + H(+). It catalyses the reaction calcidiol + UDP-alpha-D-glucuronate = calcidiol 3-O-(beta-D-glucuronide) + UDP + H(+). The catalysed reaction is calcitriol + UDP-alpha-D-glucuronate = calcitriol 25-O-(beta-D-glucuronide) + UDP + H(+). It carries out the reaction (5Z,8Z,11Z,14Z)-eicosatetraenoate + UDP-alpha-D-glucuronate = O-[(5Z),(8Z),(11Z),(14Z)-eicosatetraenoyl]-beta-D-glucuronate + UDP. The enzyme catalyses 15-hydroxy-(5Z,8Z,11Z,13E)-eicosatetraenoate + UDP-alpha-D-glucuronate = 15-O-(beta-D-glucuronosyl)-(5Z,8Z,11Z,14Z)-eicosatetraenoate + UDP + H(+). It catalyses the reaction 20-hydroxy-(5Z,8Z,11Z,14Z)-eicosatetraenoate + UDP-alpha-D-glucuronate = 20-O-(beta-D-glucuronosyl)-(5Z,8Z,11Z,14Z)-eicosatetraenoate + UDP + H(+). Its function is as follows. UDP-glucuronosyltransferase (UGT) that catalyzes phase II biotransformation reactions in which lipophilic substrates are conjugated with glucuronic acid to increase the metabolite's water solubility, thereby facilitating excretion into either the urine or bile. Essential for the elimination and detoxification of drugs, xenobiotics and endogenous compounds. Involved in the glucuronidation of calcidiol, which is the major circulating form of vitamin D3 essential for the regulation of calcium and phosphate homeostasis. Also glucuronidates the biologically active form of vitamin D3, calcitriol, probably leading to its biliary transport and intestinal reabsorption. Involved in the glucuronidation of arachidonic acid (AA) and AA-derived eicosanoids including 15-HETE, 20-HETE and PGB1. This Oryctolagus cuniculus (Rabbit) protein is UDP-glucuronosyltransferase 1A4 (Ugt1a4).